We begin with the raw amino-acid sequence, 209 residues long: MIKTNDFMEIMKGRRSIRNYDPAVKISKEEMTEILEEATTAPSSVNAQPWRFLVIDSPEGKEKLAPLASFNQTQVTTSSAVIAVFADMNNADYLEEIYSKAVELGYMPQEVKDRQIAALTAHFEKLPAQVNRETILIDGGLVSMQLMLTARAHGYDTNPIGGYDKENIAETFGLDKERYVPVMLLSIGKAADEGYASYRLPIDTIAEWK.

FMN-binding positions include 14–16 (RRS), 72–74 (QTQ), 161–162 (GG), and arginine 199.

It belongs to the nitroreductase family. FMN is required as a cofactor.

In Bacillus subtilis (strain 168), this protein is Putative NAD(P)H nitroreductase YdgI (ydgI).